A 371-amino-acid polypeptide reads, in one-letter code: Putative glutamate--cysteine ligase 2 (371 aa).

This sequence belongs to the glutamate--cysteine ligase type 2 family. YbdK subfamily. As to quaternary structure, homodimer.

The enzyme catalyses L-cysteine + L-glutamate + ATP = gamma-L-glutamyl-L-cysteine + ADP + phosphate + H(+). Its function is as follows. ATP-dependent carboxylate-amine ligase which exhibits weak glutamate--cysteine ligase activity. In Klebsiella pneumoniae (strain 342), this protein is Putative glutamate--cysteine ligase 2.